The primary structure comprises 63 residues: Race-specific elicitor A9 (63 aa).

Positions 1-23 (MKLSLLSVELALLIATTLPLCWA) are cleaved as a signal peptide. Positions 24-35 (AALPVGLGVGLD) are excised as a propeptide. 3 cysteine pairs are disulfide-bonded: C37–C51, C41–C54, and C47–C61.

Its function is as follows. This necrosis-inducing peptide induces a hypersensitive response on Cf-9 tomato genotypes. Race-specific elicitors are compounds which only induce defense responses in genotypes of host plants which are resistant to the pathogenic race that produces the elicitor, but not in susceptible genotypes. The chain is Race-specific elicitor A9 (AVR9) from Passalora fulva (Tomato leaf mold).